The primary structure comprises 690 residues: Glycine--tRNA ligase beta subunit (690 aa).

The protein belongs to the class-II aminoacyl-tRNA synthetase family. Tetramer of two alpha and two beta subunits.

It is found in the cytoplasm. It catalyses the reaction tRNA(Gly) + glycine + ATP = glycyl-tRNA(Gly) + AMP + diphosphate. The sequence is that of Glycine--tRNA ligase beta subunit from Buchnera aphidicola subsp. Acyrthosiphon pisum (strain 5A).